A 495-amino-acid polypeptide reads, in one-letter code: Loline biosynthesis cluster 1 transcription factor lolU1 (495 aa).

The protein resides in the nucleus. In terms of biological role, transcriptional regulator that may regulate the expression of the loline biosynthesis cluster 1, one of the 2 clusters involved in the biosynthesis of loline alkaloids, potent insecticidal agents composed of a pyrrolizidine ring system and an uncommon ether bridge linking carbons 2 and 7. The protein is Loline biosynthesis cluster 1 transcription factor lolU1 of Epichloe uncinata (Endophyte fungus).